Consider the following 414-residue polypeptide: Methyl-CpG-binding domain protein 2 (414 aa).

A required for interaction with DHX9 and PRMT5 region spans residues 1 to 152 (MRAHPGGGRC…GPRATESGKR (152 aa)). Positions 1–163 (MRAHPGGGRC…DCPALPPGWK (163 aa)) are disordered. Residues 77 to 95 (GRGRGRGRGRGRGRGRGRG) are compositionally biased toward basic residues. A compositionally biased stretch (gly residues) spans 98-123 (QSGGSGLGGDGGGGAGGCGGGSGGGV). Positions 148–216 (ESGKRMDCPA…SSFDFRTGKM (69 aa)) constitute an MBD domain. Ser184 bears the Phosphoserine mark. Residues 217–244 (MPSKLQKNKQRLRNDPLNQNKGKPDLNT) form a disordered region. The segment covering 232–244 (PLNQNKGKPDLNT) has biased composition (polar residues). Ser410 is modified (phosphoserine).

Heterodimer with MBD3 (via N-terminus). Component of the MeCP1 complex that contains HDAC1 and HDAC2. Component of the nucleosome remodeling and deacetylase (NuRD) repressor complex, composed of core proteins MTA1, MTA2, MTA3, RBBP4, RBBP7, HDAC1, HDAC2, MBD2, MBD3, and peripherally associated proteins CDK2AP1, CDK2AP2, GATAD2A, GATAD2B, CHD3, CHD4 and CHD5. The exact stoichiometry of the NuRD complex is unknown, and some subunits such as MBD2 and MBD3, GATAD2A and GATAD2B, and CHD3, CHD4 and CHD5 define mutually exclusive NuRD complexes. Interacts with CDK2AP1. Interacts with DHX9. Interacts with DNMT1. Interacts with GATAD2A/p66-alpha. Interacts with GATAD2B/p66-beta. Interacts with GPN1. Interacts with MIZF. Interacts with PRMT5. Interacts with SIN3A. Interacts with SPHK2. In terms of tissue distribution, highly expressed in brain, heart, kidney, lung, skeletal muscle, spleen and testis. Detected at lower levels in embryonic stem cells.

The protein localises to the nucleus. It is found in the chromosome. In terms of biological role, binds CpG islands in promoters where the DNA is methylated at position 5 of cytosine within CpG dinucleotides. Binds hemimethylated DNA as well. Recruits histone deacetylases and DNA methyltransferases to chromatin. Acts as a component of the histone deacetylase NuRD complex which participates in the remodeling of chromatin. Acts as transcriptional repressor and plays a role in gene silencing. Functions as a scaffold protein, targeting GATAD2A and GATAD2B to chromatin to promote repression. May enhance the activation of some unmethylated cAMP-responsive promoters. Selectively represses transcription activity of methylated rRNA promoters. The protein is Methyl-CpG-binding domain protein 2 of Mus musculus (Mouse).